The chain runs to 333 residues: Foldase protein PrsA (333 aa).

The first 22 residues, 1–22 (MKKSTKLLAGIVTLASAMTLAA), serve as a signal peptide directing secretion. The N-palmitoyl cysteine moiety is linked to residue Cys-23. Cys-23 carries the S-diacylglycerol cysteine lipid modification. Residues 145–240 (TPEMTTQVIT…NKFYIVKVTK (96 aa)) enclose the PpiC domain. Positions 301–333 (DKKASKANTSKSDQKTSSDSSKDSQSSKSKSEK) are disordered. Basic and acidic residues predominate over residues 312–322 (SDQKTSSDSSK). Residues 323–333 (DSQSSKSKSEK) are compositionally biased toward low complexity.

This sequence belongs to the PrsA family.

Its subcellular location is the cell membrane. It catalyses the reaction [protein]-peptidylproline (omega=180) = [protein]-peptidylproline (omega=0). Its function is as follows. Plays a major role in protein secretion by helping the post-translocational extracellular folding of several secreted proteins. The chain is Foldase protein PrsA from Streptococcus equi subsp. zooepidemicus (strain H70).